Consider the following 300-residue polypeptide: GTPase Era (300 aa).

An Era-type G domain is found at 5-176 (RSGFVCLIGR…IDVLAAALPP (172 aa)). The segment at 13 to 20 (GRPNTGKS) is G1. Position 13 to 20 (13 to 20 (GRPNTGKS)) interacts with GTP. A G2 region spans residues 39–43 (QTTRH). The interval 61–64 (DTPG) is G3. GTP is bound by residues 61-65 (DTPGL) and 125-128 (TKID). The segment at 125–128 (TKID) is G4. The interval 155–157 (VSA) is G5. The 80-residue stretch at 207–286 (VHDELPHSLA…YLDLHVNVAK (80 aa)) folds into the KH type-2 domain.

Belongs to the TRAFAC class TrmE-Era-EngA-EngB-Septin-like GTPase superfamily. Era GTPase family. Monomer.

The protein resides in the cell envelope. The protein localises to the secreted. It localises to the cell wall. Functionally, exhibits GTPase activity. Binds RNA but is probably not involved in ribosome assembly in mycobacteria. This chain is GTPase Era, found in Mycobacterium leprae (strain TN).